The following is a 436-amino-acid chain: Phosphomethylpyrimidine synthase (436 aa).

Substrate is bound by residues asparagine 68, methionine 97, tyrosine 126, histidine 166, 188-190 (SRG), 229-232 (DGFR), and glutamate 268. Histidine 272 lines the Zn(2+) pocket. Tyrosine 295 contacts substrate. Residue histidine 336 coordinates Zn(2+). Residues cysteine 412, cysteine 415, and cysteine 419 each coordinate [4Fe-4S] cluster.

It belongs to the ThiC family. As to quaternary structure, homodimer. Requires [4Fe-4S] cluster as cofactor.

The enzyme catalyses 5-amino-1-(5-phospho-beta-D-ribosyl)imidazole + S-adenosyl-L-methionine = 4-amino-2-methyl-5-(phosphooxymethyl)pyrimidine + CO + 5'-deoxyadenosine + formate + L-methionine + 3 H(+). Its pathway is cofactor biosynthesis; thiamine diphosphate biosynthesis. In terms of biological role, catalyzes the synthesis of the hydroxymethylpyrimidine phosphate (HMP-P) moiety of thiamine from aminoimidazole ribotide (AIR) in a radical S-adenosyl-L-methionine (SAM)-dependent reaction. The sequence is that of Phosphomethylpyrimidine synthase from Geobacter metallireducens (strain ATCC 53774 / DSM 7210 / GS-15).